A 179-amino-acid polypeptide reads, in one-letter code: Large ribosomal subunit protein uL5 (179 aa).

Belongs to the universal ribosomal protein uL5 family. Part of the 50S ribosomal subunit; part of the 5S rRNA/L5/L18/L25 subcomplex. Contacts the 5S rRNA and the P site tRNA. Forms a bridge to the 30S subunit in the 70S ribosome.

This is one of the proteins that bind and probably mediate the attachment of the 5S RNA into the large ribosomal subunit, where it forms part of the central protuberance. In the 70S ribosome it contacts protein S13 of the 30S subunit (bridge B1b), connecting the 2 subunits; this bridge is implicated in subunit movement. Contacts the P site tRNA; the 5S rRNA and some of its associated proteins might help stabilize positioning of ribosome-bound tRNAs. This is Large ribosomal subunit protein uL5 from Proteus mirabilis (strain HI4320).